The chain runs to 432 residues: Cytoplasmic 60S subunit biogenesis factor REH1 (432 aa).

The C2H2-type 1 zinc-finger motif lies at 6–30 (FTCNCCVIQFKTSDLQRYHMKTEWH). The segment at 79 to 150 (QSNALPQKQK…NTDYGEDTVS (72 aa)) is disordered. Residues 86–98 (KQKKPIKSKRGRK) show a composition bias toward basic residues. Residues 105–117 (KRKDRDIAKEKQN) show a composition bias toward basic and acidic residues. Positions 118–143 (RSVSPSGSISSQLSNLTVGTENTNTD) are enriched in polar residues. 2 C2H2-type zinc fingers span residues 186–209 (TECI…FSEH) and 237–261 (HNCL…SKRH).

It belongs to the REI1 family. In terms of assembly, associates with nascent pre-60S particles that have not yet entered the translating pool, and is released from mature 60S subunits. Interacts with pre-60S factors NMD3, LSG1, and TIF6.

The protein localises to the cytoplasm. Functionally, pre-60S-associated cytoplasmic factor involved in the cytoplasmic maturation of the 60S subunit. May act redundantly with REI1 to directly promote a stabilizing structural rearrangement in cytoplasmic 60S subunit maturation independent on the REI1-specific ARX1 recycling. The chain is Cytoplasmic 60S subunit biogenesis factor REH1 (REH1) from Saccharomyces cerevisiae (strain ATCC 204508 / S288c) (Baker's yeast).